Here is a 369-residue protein sequence, read N- to C-terminus: Serine proteinase inhibitor 1 (369 aa).

This sequence belongs to the serpin family. Poxviruses subfamily.

In terms of biological role, important in virulence. This Oryctolagus cuniculus (Rabbit) protein is Serine proteinase inhibitor 1 (SPI-1).